Consider the following 462-residue polypeptide: Exodeoxyribonuclease 7 large subunit (462 aa).

It belongs to the XseA family. In terms of assembly, heterooligomer composed of large and small subunits.

It localises to the cytoplasm. The enzyme catalyses Exonucleolytic cleavage in either 5'- to 3'- or 3'- to 5'-direction to yield nucleoside 5'-phosphates.. Functionally, bidirectionally degrades single-stranded DNA into large acid-insoluble oligonucleotides, which are then degraded further into small acid-soluble oligonucleotides. The sequence is that of Exodeoxyribonuclease 7 large subunit from Proteus mirabilis (strain HI4320).